Here is a 412-residue protein sequence, read N- to C-terminus: Alanyl-tRNA editing protein Aarsd1 (412 aa).

Zn(2+)-binding residues include H109 and H113. S174 carries the phosphoserine modification. Residues C209 and H213 each coordinate Zn(2+).

Belongs to the class-II aminoacyl-tRNA synthetase family. Alax-L subfamily. Requires Zn(2+) as cofactor.

It is found in the cytoplasm. Its function is as follows. Functions in trans to edit the amino acid moiety from incorrectly charged Ser-tRNA(Ala). This is Alanyl-tRNA editing protein Aarsd1 (Aarsd1) from Mus musculus (Mouse).